A 154-amino-acid polypeptide reads, in one-letter code: Proteasome subunit beta type-4 (154 aa).

Met-1 is modified (N-acetylmethionine). A propeptide spanning residues 1-45 is cleaved from the precursor; sequence MESILESRSGHWAGGPAPGQFYRIPPTPGSIVDPXSVLYGSPITR. A Phosphotyrosine modification is found at Tyr-102.

This sequence belongs to the peptidase T1B family. As to quaternary structure, the 26S proteasome consists of a 20S proteasome core and two 19S regulatory subunits. The 20S proteasome core is a barrel-shaped complex made of 28 subunits that are arranged in four stacked rings. The two outer rings are each formed by seven alpha subunits, and the two inner rings are formed by seven beta subunits. The proteolytic activity is exerted by three beta-subunits PSMB5, PSMB6 and PSMB7. Forms a ternary complex with SMAD1 and OAZ1 before PSMB4 is incorporated into the 20S proteasome. Interacts with PRPF19.

Its subcellular location is the cytoplasm. It localises to the nucleus. Non-catalytic component of the 20S core proteasome complex involved in the proteolytic degradation of most intracellular proteins. This complex plays numerous essential roles within the cell by associating with different regulatory particles. Associated with two 19S regulatory particles, forms the 26S proteasome and thus participates in the ATP-dependent degradation of ubiquitinated proteins. The 26S proteasome plays a key role in the maintenance of protein homeostasis by removing misfolded or damaged proteins that could impair cellular functions, and by removing proteins whose functions are no longer required. Associated with the PA200 or PA28, the 20S proteasome mediates ubiquitin-independent protein degradation. This type of proteolysis is required in several pathways including spermatogenesis (20S-PA200 complex) or generation of a subset of MHC class I-presented antigenic peptides (20S-PA28 complex). SMAD1/OAZ1/PSMB4 complex mediates the degradation of the CREBBP/EP300 repressor SNIP1. The sequence is that of Proteasome subunit beta type-4 (PSMB4) from Sus scrofa (Pig).